The primary structure comprises 429 residues: Serine--tRNA ligase (429 aa).

236-238 (TGE) is a binding site for L-serine. 267–269 (RSE) provides a ligand contact to ATP. Residue Glu-290 participates in L-serine binding. 354–357 (EISS) provides a ligand contact to ATP. L-serine is bound at residue Ser-390.

It belongs to the class-II aminoacyl-tRNA synthetase family. Type-1 seryl-tRNA synthetase subfamily. Homodimer. The tRNA molecule binds across the dimer.

It is found in the cytoplasm. The catalysed reaction is tRNA(Ser) + L-serine + ATP = L-seryl-tRNA(Ser) + AMP + diphosphate + H(+). It carries out the reaction tRNA(Sec) + L-serine + ATP = L-seryl-tRNA(Sec) + AMP + diphosphate + H(+). Its pathway is aminoacyl-tRNA biosynthesis; selenocysteinyl-tRNA(Sec) biosynthesis; L-seryl-tRNA(Sec) from L-serine and tRNA(Sec): step 1/1. Catalyzes the attachment of serine to tRNA(Ser). Is also able to aminoacylate tRNA(Sec) with serine, to form the misacylated tRNA L-seryl-tRNA(Sec), which will be further converted into selenocysteinyl-tRNA(Sec). The polypeptide is Serine--tRNA ligase (Vesicomyosocius okutanii subsp. Calyptogena okutanii (strain HA)).